A 418-amino-acid chain; its full sequence is Gamma-glutamyl phosphate reductase (418 aa).

It belongs to the gamma-glutamyl phosphate reductase family.

The protein resides in the cytoplasm. It catalyses the reaction L-glutamate 5-semialdehyde + phosphate + NADP(+) = L-glutamyl 5-phosphate + NADPH + H(+). It participates in amino-acid biosynthesis; L-proline biosynthesis; L-glutamate 5-semialdehyde from L-glutamate: step 2/2. Its function is as follows. Catalyzes the NADPH-dependent reduction of L-glutamate 5-phosphate into L-glutamate 5-semialdehyde and phosphate. The product spontaneously undergoes cyclization to form 1-pyrroline-5-carboxylate. The protein is Gamma-glutamyl phosphate reductase of Syntrophotalea carbinolica (strain DSM 2380 / NBRC 103641 / GraBd1) (Pelobacter carbinolicus).